The sequence spans 445 residues: Methylenetetrahydrofolate--tRNA-(uracil-5-)-methyltransferase TrmFO (445 aa).

Residue 9 to 14 (GGGLAG) coordinates FAD.

This sequence belongs to the MnmG family. TrmFO subfamily. FAD is required as a cofactor.

The protein resides in the cytoplasm. It carries out the reaction uridine(54) in tRNA + (6R)-5,10-methylene-5,6,7,8-tetrahydrofolate + NADH + H(+) = 5-methyluridine(54) in tRNA + (6S)-5,6,7,8-tetrahydrofolate + NAD(+). The catalysed reaction is uridine(54) in tRNA + (6R)-5,10-methylene-5,6,7,8-tetrahydrofolate + NADPH + H(+) = 5-methyluridine(54) in tRNA + (6S)-5,6,7,8-tetrahydrofolate + NADP(+). In terms of biological role, catalyzes the folate-dependent formation of 5-methyl-uridine at position 54 (M-5-U54) in all tRNAs. The protein is Methylenetetrahydrofolate--tRNA-(uracil-5-)-methyltransferase TrmFO of Rhizorhabdus wittichii (strain DSM 6014 / CCUG 31198 / JCM 15750 / NBRC 105917 / EY 4224 / RW1) (Sphingomonas wittichii).